A 1079-amino-acid chain; its full sequence is DNA-directed RNA polymerase subunit beta (1079 aa).

The tract at residues arginine 963–arginine 982 is disordered. The segment covering glycine 966–proline 975 has biased composition (polar residues).

The protein belongs to the RNA polymerase beta chain family. In terms of assembly, in plastids the minimal PEP RNA polymerase catalytic core is composed of four subunits: alpha, beta, beta', and beta''. When a (nuclear-encoded) sigma factor is associated with the core the holoenzyme is formed, which can initiate transcription.

The protein resides in the plastid. Its subcellular location is the chloroplast. It carries out the reaction RNA(n) + a ribonucleoside 5'-triphosphate = RNA(n+1) + diphosphate. Functionally, DNA-dependent RNA polymerase catalyzes the transcription of DNA into RNA using the four ribonucleoside triphosphates as substrates. In Pelargonium hortorum (Common geranium), this protein is DNA-directed RNA polymerase subunit beta.